Here is a 268-residue protein sequence, read N- to C-terminus: uncharacterized protein (268 aa).

To M.tuberculosis Rv0025 and Rv0026.

This is an uncharacterized protein from Mycobacterium tuberculosis (strain CDC 1551 / Oshkosh).